Here is a 129-residue protein sequence, read N- to C-terminus: PFTFKPRQRPVFSDSRSGSVINGSNPTAERLGQQSYGISLYGFARCQRGRPKSNEDYKDVKFSIGCMGKCKRNIEQPGVLETTLKQMCATDCRDDDSSDASGPLDAALLGSLDSSRDHKPDKPVRRNSS.

Disordered regions lie at residues 1–28 (PFTFKPRQRPVFSDSRSGSVINGSNPTA) and 91–129 (DCRDDDSSDASGPLDAALLGSLDSSRDHKPDKPVRRNSS). Residues 14–28 (DSRSGSVINGSNPTA) are compositionally biased toward polar residues. A compositionally biased stretch (low complexity) spans 99–113 (DASGPLDAALLGSLD). Residues 114-129 (SSRDHKPDKPVRRNSS) are compositionally biased toward basic and acidic residues.

This sequence belongs to the encephalomyocarditis virus protein 2B* family.

In Homo sapiens (Human), this protein is Protein 2B*.